A 367-amino-acid chain; its full sequence is Glutamate 5-kinase (367 aa).

K10 provides a ligand contact to ATP. Positions 50, 137, and 149 each coordinate substrate. Residues 169-170 (TD) and 211-217 (TGGMATK) each bind ATP. The PUA domain maps to 275–353 (AGELVVDDGA…QQIGEILGYE (79 aa)).

The protein belongs to the glutamate 5-kinase family.

It localises to the cytoplasm. It carries out the reaction L-glutamate + ATP = L-glutamyl 5-phosphate + ADP. It participates in amino-acid biosynthesis; L-proline biosynthesis; L-glutamate 5-semialdehyde from L-glutamate: step 1/2. Functionally, catalyzes the transfer of a phosphate group to glutamate to form L-glutamate 5-phosphate. This chain is Glutamate 5-kinase, found in Erwinia tasmaniensis (strain DSM 17950 / CFBP 7177 / CIP 109463 / NCPPB 4357 / Et1/99).